Here is a 338-residue protein sequence, read N- to C-terminus: MNLKKFPRHALTFGPTPIHPLKRLSAHLGGEVELYAKREDCNSGLAFGGNKTRKLEYLIPEALEGGYDTLVSIGGIQSNQTRQVAAVAAHLGLKCVLVQENWVNYSDAVYDRVGNIEMSRIMGADVRLDSAGFDIGIRKSWEEAMADVRKAGGKPFPIPAGCSEHPRGGLGFVGFAEEVRQQEAELGFKFDYIVTCSVTGSTQAGMVVGFAADGRADRVIGIDASAKPEQTFAQIVRIAKGTAELVELGRDITDKDVVLDRRFGGPEYGLPNEGTLESIRLCARLEGMLTDPVYEGKSMHGMIEKVRLGEFPAGSKVLYAHLGGVPALNAYSFLFRNG.

Lysine 51 carries the N6-(pyridoxal phosphate)lysine modification. The active-site Nucleophile is the serine 78.

It belongs to the ACC deaminase/D-cysteine desulfhydrase family. As to quaternary structure, homotrimer. Pyridoxal 5'-phosphate serves as cofactor.

It carries out the reaction 1-aminocyclopropane-1-carboxylate + H2O = 2-oxobutanoate + NH4(+). Catalyzes a cyclopropane ring-opening reaction, the irreversible conversion of 1-aminocyclopropane-1-carboxylate (ACC) to ammonia and alpha-ketobutyrate. Allows growth on ACC as a nitrogen source. In Variovorax paradoxus (strain S110), this protein is 1-aminocyclopropane-1-carboxylate deaminase.